The chain runs to 332 residues: Holliday junction branch migration complex subunit RuvB (332 aa).

Positions Met-1–Tyr-181 are large ATPase domain (RuvB-L). Residues Leu-20, Arg-21, Gly-62, Lys-65, Thr-66, Thr-67, Glu-128–Phe-130, Arg-171, Tyr-181, and Arg-218 contribute to the ATP site. Mg(2+) is bound at residue Thr-66. A small ATPAse domain (RuvB-S) region spans residues Ala-182 to Asp-252. The tract at residues His-255–Lys-332 is head domain (RuvB-H). 4 residues coordinate DNA: Arg-291, Arg-310, Arg-312, and Arg-315.

This sequence belongs to the RuvB family. Homohexamer. Forms an RuvA(8)-RuvB(12)-Holliday junction (HJ) complex. HJ DNA is sandwiched between 2 RuvA tetramers; dsDNA enters through RuvA and exits via RuvB. An RuvB hexamer assembles on each DNA strand where it exits the tetramer. Each RuvB hexamer is contacted by two RuvA subunits (via domain III) on 2 adjacent RuvB subunits; this complex drives branch migration. In the full resolvosome a probable DNA-RuvA(4)-RuvB(12)-RuvC(2) complex forms which resolves the HJ.

Its subcellular location is the cytoplasm. It carries out the reaction ATP + H2O = ADP + phosphate + H(+). Functionally, the RuvA-RuvB-RuvC complex processes Holliday junction (HJ) DNA during genetic recombination and DNA repair, while the RuvA-RuvB complex plays an important role in the rescue of blocked DNA replication forks via replication fork reversal (RFR). RuvA specifically binds to HJ cruciform DNA, conferring on it an open structure. The RuvB hexamer acts as an ATP-dependent pump, pulling dsDNA into and through the RuvAB complex. RuvB forms 2 homohexamers on either side of HJ DNA bound by 1 or 2 RuvA tetramers; 4 subunits per hexamer contact DNA at a time. Coordinated motions by a converter formed by DNA-disengaged RuvB subunits stimulates ATP hydrolysis and nucleotide exchange. Immobilization of the converter enables RuvB to convert the ATP-contained energy into a lever motion, pulling 2 nucleotides of DNA out of the RuvA tetramer per ATP hydrolyzed, thus driving DNA branch migration. The RuvB motors rotate together with the DNA substrate, which together with the progressing nucleotide cycle form the mechanistic basis for DNA recombination by continuous HJ branch migration. Branch migration allows RuvC to scan DNA until it finds its consensus sequence, where it cleaves and resolves cruciform DNA. The protein is Holliday junction branch migration complex subunit RuvB of Streptococcus pneumoniae (strain JJA).